The following is a 430-amino-acid chain: Serine hydroxymethyltransferase (430 aa).

Residue 120 to 122 coordinates (6S)-5,6,7,8-tetrahydrofolate; sequence GHI. K226 is subject to N6-(pyridoxal phosphate)lysine.

It belongs to the SHMT family. Homodimer. The cofactor is pyridoxal 5'-phosphate.

It is found in the cytoplasm. The protein operates within amino-acid biosynthesis; glycine biosynthesis; glycine from L-serine: step 1/1. In terms of biological role, catalyzes the reversible interconversion of serine and glycine with a modified folate serving as the one-carbon carrier. Also exhibits a pteridine-independent aldolase activity toward beta-hydroxyamino acids, producing glycine and aldehydes, via a retro-aldol mechanism. This is Serine hydroxymethyltransferase from Pyrobaculum neutrophilum (strain DSM 2338 / JCM 9278 / NBRC 100436 / V24Sta) (Thermoproteus neutrophilus).